The sequence spans 541 residues: Cyclin-T1-4 (541 aa).

The interval 277–366 is disordered; the sequence is VSEVESSVGG…KSRSGVEAPG (90 aa). Residues 307 to 325 show a composition bias toward polar residues; that stretch reads SDNLGGSTKATQNRSNDNG. A compositionally biased stretch (basic and acidic residues) spans 336-354; sequence QKGERDTETKDSMHTESHP. Ser396 is modified (phosphoserine). Positions 445 to 541 are disordered; sequence EDDKDIQNKS…REPRRHSQER (97 aa). Residues 493-511 are compositionally biased toward basic and acidic residues; the sequence is MESPCEKQLGEGKRRHDNS. Residues 519–528 show a composition bias toward polar residues; sequence KTNPGGSSHS. A compositionally biased stretch (basic and acidic residues) spans 529–541; the sequence is YGDREPRRHSQER.

This sequence belongs to the cyclin family. Cyclin T subfamily.

The chain is Cyclin-T1-4 (CYCT1-4) from Arabidopsis thaliana (Mouse-ear cress).